Reading from the N-terminus, the 454-residue chain is tRNA(Ile)-lysidine synthase (454 aa).

Residue 31–36 (SGGADS) participates in ATP binding.

This sequence belongs to the tRNA(Ile)-lysidine synthase family.

The protein localises to the cytoplasm. The enzyme catalyses cytidine(34) in tRNA(Ile2) + L-lysine + ATP = lysidine(34) in tRNA(Ile2) + AMP + diphosphate + H(+). Functionally, ligates lysine onto the cytidine present at position 34 of the AUA codon-specific tRNA(Ile) that contains the anticodon CAU, in an ATP-dependent manner. Cytidine is converted to lysidine, thus changing the amino acid specificity of the tRNA from methionine to isoleucine. This Porphyromonas gingivalis (strain ATCC 33277 / DSM 20709 / CIP 103683 / JCM 12257 / NCTC 11834 / 2561) protein is tRNA(Ile)-lysidine synthase.